The primary structure comprises 500 residues: Lysine--tRNA ligase (500 aa).

Mg(2+)-binding residues include Glu-410 and Glu-417.

The protein belongs to the class-II aminoacyl-tRNA synthetase family. In terms of assembly, homodimer. Mg(2+) serves as cofactor.

The protein localises to the cytoplasm. The enzyme catalyses tRNA(Lys) + L-lysine + ATP = L-lysyl-tRNA(Lys) + AMP + diphosphate. The chain is Lysine--tRNA ligase from Pseudomonas putida (strain ATCC 700007 / DSM 6899 / JCM 31910 / BCRC 17059 / LMG 24140 / F1).